The sequence spans 216 residues: UPF0711 protein C18orf21 homolog (216 aa).

Disordered stretches follow at residues 118 to 185 (RSFL…ASKT) and 197 to 216 (SQSE…LSSL). A compositionally biased stretch (polar residues) spans 124 to 136 (LKSNPTTPTSKLS). Ser126 is subject to Phosphoserine. A phosphothreonine mark is found at Thr130 and Thr139. Polar residues-rich tracts occupy residues 145–157 (PSSA…SGSK) and 167–182 (TPTS…SKNA). The segment covering 200 to 209 (ESKKNPKMDF) has biased composition (basic and acidic residues).

Belongs to the UPF0711 family.

The chain is UPF0711 protein C18orf21 homolog from Bos taurus (Bovine).